Consider the following 241-residue polypeptide: GTP cyclohydrolase 1 (241 aa).

Residues 1-11 (MEKPRGVRCTN) constitute a propeptide that is removed on maturation. Residues 1–58 (MEKPRGVRCTNGFPERELPRPGASRPAEKSRPPEAKGAQPADAWKAGRPRSEEDNELN) are disordered. Residues S51 and S72 each carry the phosphoserine modification. Zn(2+) contacts are provided by C132, H135, and C203.

Belongs to the GTP cyclohydrolase I family. In terms of assembly, toroid-shaped homodecamer, composed of two pentamers of five dimers. Interacts with AHSA1 and GCHFR/GFRP. Post-translationally, phosphorylated.

Its subcellular location is the cytoplasm. It localises to the nucleus. It carries out the reaction GTP + H2O = 7,8-dihydroneopterin 3'-triphosphate + formate + H(+). The protein operates within cofactor biosynthesis; 7,8-dihydroneopterin triphosphate biosynthesis; 7,8-dihydroneopterin triphosphate from GTP: step 1/1. GTP shows a positive allosteric effect, and tetrahydrobiopterin inhibits the enzyme activity. Zinc is required for catalytic activity. Inhibited by Mg(2+). Its function is as follows. May positively regulate nitric oxide synthesis in endothelial cells. May be involved in dopamine synthesis. May modify pain sensitivity and persistence. The sequence is that of GTP cyclohydrolase 1 (Gch1) from Rattus norvegicus (Rat).